An 89-amino-acid chain; its full sequence is UPF0335 protein CCNA_03428 (89 aa).

This sequence belongs to the UPF0335 family.

This is UPF0335 protein CCNA_03428 from Caulobacter vibrioides (strain NA1000 / CB15N) (Caulobacter crescentus).